We begin with the raw amino-acid sequence, 184 residues long: Succinate dehydrogenase cytochrome b560 subunit, mitochondrial (184 aa).

A helical transmembrane segment spans residues 65 to 94 (LTWMLSGFHRISGCVMAGTLLVGGLGFAVL). Residues 95-114 (PLDFTTFVEYIRGWNLPCAV) lie on the Mitochondrial intermembrane side of the membrane. Residues 115 to 139 (TAVFKYIIAFPIIFHTLNGIRFLGF) form a helical membrane-spanning segment. Residue H129 participates in heme binding. At 140–147 (DLAKGVDN) the chain is on the mitochondrial matrix side. Residues 148–169 (IGQVYKSGWLVFGVSAVIALAI) form a helical membrane-spanning segment. Residues 170 to 172 (VIN) lie on the Mitochondrial intermembrane side of the membrane.

This sequence belongs to the cytochrome b560 family. Component of complex II composed of four subunits: a flavoprotein (FP), iron-sulfur protein (IP), and a cytochrome b560 composed of two transmembrane proteins. It depends on heme as a cofactor.

It is found in the mitochondrion inner membrane. Its pathway is carbohydrate metabolism; tricarboxylic acid cycle. In terms of biological role, membrane-anchoring subunit of succinate dehydrogenase (SDH) that is involved in complex II of the mitochondrial electron transport chain and is responsible for transferring electrons from succinate to ubiquinone (coenzyme Q). Mediates resistance to enteropathogenic E.coli infection. In Caenorhabditis briggsae, this protein is Succinate dehydrogenase cytochrome b560 subunit, mitochondrial (mev-1).